A 394-amino-acid polypeptide reads, in one-letter code: Probable glycosyltransferase FCK3 (394 aa).

It belongs to the afumC glycosyltransferase family.

Its pathway is secondary metabolite biosynthesis. In terms of biological role, probable glycosyl transferase; part of the gene cluster that mediates the biosynthesis of cytokinins such as fusatin, fusatinic acids or 8-oxofusatin, known for their growth promoting and anti-senescence activities toward host plants. FCK1 is a bifunctional enzyme that performs the first steps in the biosynthesis of Fusarium cytokinins. It first condenses adenosine monophosphate (AMP) with dimethylallyl diphosphate (DMAPP) to yield isoprenyl adenosine monophosphate. It then catalyzes the removal of the phosphoribose to produce isopentenylaldehyde. The cytochrome P450 monooxygenase then converts isopentenylaldehyde to trans-zeatin. A condensation step converts trans-zeatin to fusatin which is further modified to produce fusatinic acid. The mechanism for oxidation of fusatin to fusatinic acid remains unknown. 8-oxofusatin could be produced through several pathways, via direct oxygenation of fusatin, or via the 8-oxo-pentenyladenine intermediate which itself must arise from either the prenylation of 8-oxo-AMP by FCK1 and/or oxygenation of isopentenylaldehyde. Both the FCK3 and FCK4 enzymes act downstream of the identified cytokinins to produce yet unidentified compounds. The sequence is that of Probable glycosyltransferase FCK3 from Fusarium pseudograminearum (strain CS3096) (Wheat and barley crown-rot fungus).